A 253-amino-acid chain; its full sequence is Small ribosomal subunit protein uS2 (253 aa).

Ser2 bears the N-acetylserine mark. Residues 212-253 (QQAAEEAAAGEEDDEAKEEVAAEEQTEAADWAEGQSEEVASW) form a disordered region. Over residues 219–238 (AAGEEDDEAKEEVAAEEQTE) the composition is skewed to acidic residues.

Belongs to the universal ribosomal protein uS2 family. In terms of assembly, component of the small ribosomal subunit. Mature ribosomes consist of a small (40S) and a large (60S) subunit. The 40S subunit contains about 33 different proteins and 1 molecule of RNA (18S). The 60S subunit contains about 49 different proteins and 3 molecules of RNA (25S, 5.8S and 5S). Interacts with RPS21.

It is found in the cytoplasm. Required for the assembly and/or stability of the 40S ribosomal subunit. Required for the processing of the 20S rRNA-precursor to mature 18S rRNA in a late step of the maturation of 40S ribosomal subunits. The protein is Small ribosomal subunit protein uS2 of Eremothecium gossypii (strain ATCC 10895 / CBS 109.51 / FGSC 9923 / NRRL Y-1056) (Yeast).